We begin with the raw amino-acid sequence, 933 residues long: Exosome complex exonuclease RRP44 homolog A (933 aa).

The PINc domain maps to 50–163; it reads KIIVVDTNVV…LVTNDRENKR (114 aa). In terms of domain architecture, CSD1 spans 217 to 321; sequence QEHKPMSEIT…NVDDAPRTSN (105 aa). The interval 296–336 is disordered; the sequence is AEEDDEEDDTVHLAPDNVDDAPRTSNLSHETSGDKNAAPVR. A CSD2 domain is found at 371–438; sequence ALFVSKDRRI…ETEVVLIEND (68 aa). Residues 469 to 798 form the RNB domain; sequence RQDLRHLLVF…FVHRLLAASL (330 aa). Mg(2+) is bound by residues Asp-481 and Asp-490.

It belongs to the RNR ribonuclease family. In terms of assembly, probable component of the RNA exosome complex. Requires Mg(2+) as cofactor.

Its subcellular location is the nucleus. In terms of biological role, catalytic component of the RNA exosome complex which has 3'-&gt;5' exoribonuclease activity and participates in a multitude of cellular RNA processing and degradation events. Required for 5.8S rRNA intermediate processing and the degradation of 5' external transcribed spacer (5' ETS), a maturation by-product of rRNA synthesis. Is not involved in the degradation of turnip crinkle virus (TCV) RNA and significant virus resistance. Required for normal development of female gametophytes and early embryogenesis. The protein is Exosome complex exonuclease RRP44 homolog A of Arabidopsis thaliana (Mouse-ear cress).